Here is a 217-residue protein sequence, read N- to C-terminus: Large ribosomal subunit protein uL3 (217 aa).

Belongs to the universal ribosomal protein uL3 family. In terms of assembly, part of the 50S ribosomal subunit. Forms a cluster with proteins L14 and L19.

In terms of biological role, one of the primary rRNA binding proteins, it binds directly near the 3'-end of the 23S rRNA, where it nucleates assembly of the 50S subunit. The chain is Large ribosomal subunit protein uL3 from Mycobacterium leprae (strain TN).